The primary structure comprises 213 residues: tRNA (guanine-N(7)-)-methyltransferase (213 aa).

The S-adenosyl-L-methionine site is built by D40, E65, N92, and D118. D118 is an active-site residue. Substrate contacts are provided by K122 and D154.

This sequence belongs to the class I-like SAM-binding methyltransferase superfamily. TrmB family.

It catalyses the reaction guanosine(46) in tRNA + S-adenosyl-L-methionine = N(7)-methylguanosine(46) in tRNA + S-adenosyl-L-homocysteine. It functions in the pathway tRNA modification; N(7)-methylguanine-tRNA biosynthesis. Catalyzes the formation of N(7)-methylguanine at position 46 (m7G46) in tRNA. The polypeptide is tRNA (guanine-N(7)-)-methyltransferase (Synechococcus elongatus (strain ATCC 33912 / PCC 7942 / FACHB-805) (Anacystis nidulans R2)).